Here is a 73-residue protein sequence, read N- to C-terminus: Alpha-amylase inhibitor Paim-1 (73 aa).

Cystine bridges form between C8/C24 and C42/C70.

Its function is as follows. Inhibits mammalian alpha-amylases specifically but has no action on plant and microbial alpha-amylases. The chain is Alpha-amylase inhibitor Paim-1 from Streptomyces olivaceoviridis (Streptomyces corchorusii).